We begin with the raw amino-acid sequence, 473 residues long: Photosystem II CP43 reaction center protein (473 aa).

Positions 1–14 (MKILYSLRRFYHVE) are excised as a propeptide. At T15 the chain carries N-acetylthreonine. T15 carries the phosphothreonine modification. 5 consecutive transmembrane segments (helical) span residues 69–93 (LFEV…PHLA), 134–155 (LLGP…KDRN), 178–200 (KALY…RKIT), 255–275 (KPFA…LSYS), and 291–312 (WFNN…ASQA). E367 contributes to the [CaMn4O5] cluster binding site. The chain crosses the membrane as a helical span at residues 447-471 (RARAAAAGFEKGIDRDLEPVLFMTP).

Belongs to the PsbB/PsbC family. PsbC subfamily. In terms of assembly, PSII is composed of 1 copy each of membrane proteins PsbA, PsbB, PsbC, PsbD, PsbE, PsbF, PsbH, PsbI, PsbJ, PsbK, PsbL, PsbM, PsbT, PsbX, PsbY, PsbZ, Psb30/Ycf12, at least 3 peripheral proteins of the oxygen-evolving complex and a large number of cofactors. It forms dimeric complexes. It depends on Binds multiple chlorophylls and provides some of the ligands for the Ca-4Mn-5O cluster of the oxygen-evolving complex. It may also provide a ligand for a Cl- that is required for oxygen evolution. PSII binds additional chlorophylls, carotenoids and specific lipids. as a cofactor.

The protein localises to the plastid. The protein resides in the chloroplast thylakoid membrane. In terms of biological role, one of the components of the core complex of photosystem II (PSII). It binds chlorophyll and helps catalyze the primary light-induced photochemical processes of PSII. PSII is a light-driven water:plastoquinone oxidoreductase, using light energy to abstract electrons from H(2)O, generating O(2) and a proton gradient subsequently used for ATP formation. The polypeptide is Photosystem II CP43 reaction center protein (Lemna minor (Common duckweed)).